The sequence spans 505 residues: Deoxyguanosinetriphosphate triphosphohydrolase (505 aa).

One can recognise an HD domain in the interval 66 to 273 (RLTHSMEVQQ…MEAADDISYC (208 aa)).

The protein belongs to the dGTPase family. Type 1 subfamily. In terms of assembly, homotetramer. The cofactor is Mg(2+).

It carries out the reaction dGTP + H2O = 2'-deoxyguanosine + triphosphate + H(+). DGTPase preferentially hydrolyzes dGTP over the other canonical NTPs. The sequence is that of Deoxyguanosinetriphosphate triphosphohydrolase from Salmonella arizonae (strain ATCC BAA-731 / CDC346-86 / RSK2980).